The primary structure comprises 707 residues: MKDAPLQIHVLLGLAITALVQAGDKKVDCPQLCTCEIRPWFTPRSIYMEASTVDCNDLGLLNFPARLPADTQILLLQTNNIARIEHSTDFPVNLTGLDLSQNNLSSVTNINVQKMSQLLSVYLEENKLTELPEKCLYGLSNLQELYVNHNLLSAISPGAFVGLHNLLRLHLNSNRLQMINSKWFEALPNLEILMLGDNPILRIKDMNFQPLLKLRSLVIAGINLTEVPDDALVGLENLESISFYDNRLNKVPQVALQKAVNLKFLDLNKNPINRIRRGDFSNMLHLKELGINNMPELVSIDSLAVDNLPDLRKIEATNNPRLSYIHPNAFFRLPKLESLMLNSNALSALYHGTIESLPNLKEISIHSNPIRCDCVIRWINMNKTNIRFMEPDSLFCVDPPEFQGQNVRQVHFRDMMEICLPLIAPESFPSILDVEADSYVSLHCRATAEPQPEIYWITPSGKRLLPNTLREKFYVHSEGTLDIRGITPKEGGLYTCIATNLVGADLKSIMIKVGGFVPQDNNGSLNIKIRDIRANSVLVSWKANSKILKSSVKWTAFVKTEDSQAAQSARIPSDVKVYNLTHLKPSTEYKICIDIPTIYQKSRKQCVNVTTKSLEHDGKENGKSHTVFVACVGGLLGIIGVMCLFGCVSQEGNCENEHSYTVNHCHKPTLAFSELYPPLINLWESSKEKPASLEVKATAIGVPTSMS.

The first 22 residues, 1-22 (MKDAPLQIHVLLGLAITALVQA), serve as a signal peptide directing secretion. The region spanning 23 to 69 (GDKKVDCPQLCTCEIRPWFTPRSIYMEASTVDCNDLGLLNFPARLPA) is the LRRNT domain. The Extracellular portion of the chain corresponds to 23 to 626 (GDKKVDCPQL…DGKENGKSHT (604 aa)). LRR repeat units lie at residues 70-91 (DTQI…TDFP), 93-114 (NLTG…NVQK), 117-138 (QLLS…CLYG), 141-162 (NLQE…AFVG), 165-186 (NLLR…WFEA), 189-210 (NLEI…NFQP), 213-234 (KLRS…ALVG), 237-258 (NLES…ALQK), 261-282 (NLKF…DFSN), 285-304 (HLKE…DSLA), 310-332 (DLRK…AFFR), and 335-358 (KLES…ESLP). Asn93 and Asn103 each carry an N-linked (GlcNAc...) asparagine glycan. The N-linked (GlcNAc...) asparagine glycan is linked to Asn223. One can recognise an LRRCT domain in the interval 368 to 421 (NPIRCDCVIRWINMNKTNIRFMEPDSLFCVDPPEFQGQNVRQVHFRDMMEICLP). N-linked (GlcNAc...) asparagine glycosylation occurs at Asn382. The Ig-like C2-type domain maps to 421–514 (PLIAPESFPS…DLKSIMIKVG (94 aa)). Cysteines 444 and 496 form a disulfide. 3 N-linked (GlcNAc...) asparagine glycosylation sites follow: Asn522, Asn579, and Asn608. The 92-residue stretch at 523–614 (GSLNIKIRDI…QCVNVTTKSL (92 aa)) folds into the Fibronectin type-III domain. A helical membrane pass occupies residues 627 to 647 (VFVACVGGLLGIIGVMCLFGC). Residues 648-707 (VSQEGNCENEHSYTVNHCHKPTLAFSELYPPLINLWESSKEKPASLEVKATAIGVPTSMS) are Cytoplasmic-facing.

It localises to the membrane. The sequence is that of Leucine-rich repeat neuronal protein 3 (Lrrn3) from Rattus norvegicus (Rat).